We begin with the raw amino-acid sequence, 335 residues long: Phosphatidylcholine:ceramide cholinephosphotransferase 2 (335 aa).

5 helical membrane passes run 60-80 (LTAFLCLMLSAFLNFFLLTVI), 104-124 (WSVGDVLSTVSSVVAFTIIFL), 136-156 (FLLGAIMYGLRAVILGVTFLP), 200-220 (ILCGDLMFSGHTVVLTIMYFV), and 229-249 (LVILRYIAAPITFLGIAALVV). Residue H210 is part of the active site. Residues H253 and D257 contribute to the active site. Residues 258–278 (VLIAYWLTSHVFWSYHQIFEM) traverse the membrane as a helical segment. Over 279–335 (RKDDRPQAPLSRLWWFWLCYWFESDVADGKLVNKWNWPLEGPQRMHTIMNRINYKLQ) the chain is Cytoplasmic.

Belongs to the sphingomyelin synthase family.

It localises to the membrane. The enzyme catalyses an N-acylsphing-4-enine + a 1,2-diacyl-sn-glycero-3-phosphocholine = a sphingomyelin + a 1,2-diacyl-sn-glycerol. The catalysed reaction is an N-acyl-15-methylhexadecasphing-4-enine + a 1,2-diacyl-sn-glycero-3-phosphocholine = an N-acyl-15-methylhexadecasphing-4-enine-1-phosphocholine + a 1,2-diacyl-sn-glycerol. The protein operates within lipid metabolism; sphingolipid metabolism. Its function is as follows. Sphingomyelin synthases (SM synthase or SMS) synthesize the sphingolipid sphingomyelin (SM) through transfer of the phosphatidyl head group of 1,2-diacyl-sn-glycero-3-phosphocholine (phosphatidylcholine, PC) on to the primary hydroxyl of ceramide (N-acylsphingoid base), yielding 1,2-diacyl-sn-glycerol (diacylglycerol, DAG) as a side product. Functions as a bidirectional lipid cholinephosphotransferases capable of converting PC and ceramide to SM and DAG and vice versa depending on the respective levels of ceramide and DAG as phosphocholine acceptors, respectively. This chain is Phosphatidylcholine:ceramide cholinephosphotransferase 2 (sms-2), found in Caenorhabditis elegans.